A 385-amino-acid polypeptide reads, in one-letter code: 8-amino-7-oxononanoate synthase (385 aa).

Arg21 lines the substrate pocket. Residue 108-109 (GF) coordinates pyridoxal 5'-phosphate. His133 provides a ligand contact to substrate. Pyridoxal 5'-phosphate-binding residues include Ser179, His207, and Thr233. The residue at position 236 (Lys236) is an N6-(pyridoxal phosphate)lysine. Substrate is bound at residue Thr352.

This sequence belongs to the class-II pyridoxal-phosphate-dependent aminotransferase family. BioF subfamily. As to quaternary structure, homodimer. Pyridoxal 5'-phosphate serves as cofactor.

The enzyme catalyses 6-carboxyhexanoyl-[ACP] + L-alanine + H(+) = (8S)-8-amino-7-oxononanoate + holo-[ACP] + CO2. Its pathway is cofactor biosynthesis; biotin biosynthesis. Functionally, catalyzes the decarboxylative condensation of pimeloyl-[acyl-carrier protein] and L-alanine to produce 8-amino-7-oxononanoate (AON), [acyl-carrier protein], and carbon dioxide. This is 8-amino-7-oxononanoate synthase from Salmonella arizonae (strain ATCC BAA-731 / CDC346-86 / RSK2980).